The primary structure comprises 117 residues: 5-hydroxyisourate hydrolase (117 aa).

Positions 7, 45, and 114 each coordinate substrate.

The protein belongs to the transthyretin family. 5-hydroxyisourate hydrolase subfamily. As to quaternary structure, homotetramer.

The catalysed reaction is 5-hydroxyisourate + H2O = 5-hydroxy-2-oxo-4-ureido-2,5-dihydro-1H-imidazole-5-carboxylate + H(+). Functionally, catalyzes the hydrolysis of 5-hydroxyisourate (HIU) to 2-oxo-4-hydroxy-4-carboxy-5-ureidoimidazoline (OHCU). This chain is 5-hydroxyisourate hydrolase, found in Ralstonia nicotianae (strain ATCC BAA-1114 / GMI1000) (Ralstonia solanacearum).